We begin with the raw amino-acid sequence, 491 residues long: Delayed-rectifier potassium channel regulatory subunit KCNS3 (491 aa).

At 1–182 (MVFGEFFHRP…IRMENPAYCL (182 aa)) the chain is on the cytoplasmic side. A helical membrane pass occupies residues 183–204 (SAKLIAISSLSVVLASIVAMCV). Residues 205–220 (HSMSEFQNEDGEVDDP) are Extracellular-facing. A helical transmembrane segment spans residues 221–243 (VLEGVEIACIAWFTGELAVRLVA). At 244-254 (APCQKKFWKNP) the chain is on the cytoplasmic side. A helical membrane pass occupies residues 255 to 275 (LNIIDFVSIIPFYATLAVDTK). Residues 276–285 (EEESEDIENM) are Extracellular-facing. Residues 286 to 306 (GKVVQILRLMRIFRILKLARH) traverse the membrane as a helical; Voltage-sensor segment. The Cytoplasmic portion of the chain corresponds to 307–321 (SVGLRSLGATLRHSY). Residues 322–343 (HEVGLLLLFLSVGISIFSVLIY) traverse the membrane as a helical segment. The Extracellular portion of the chain corresponds to 344-357 (SVEKDDHTSSLTSI). Positions 358-369 (PICWWWATISMT) form an intramembrane region, helical. A Selectivity filter motif is present at residues 370-375 (TVGYGD). Residues 370–377 (TVGYGDTH) lie within the membrane without spanning it. Topologically, residues 378 to 384 (PVTLAGK) are extracellular. The chain crosses the membrane as a helical span at residues 385–413 (LIASTCIICGILVVALPITIIFNKFSKYY). Over 414 to 491 (QKQKDIDVDQ…TASLENCTAK (78 aa)) the chain is Cytoplasmic.

It belongs to the potassium channel family. S (TC 1.A.1.2) subfamily. Kv9.3/KCNS3 sub-subfamily. As to quaternary structure, heterotetramer with KCNB1. Does not form homomultimers.

Its subcellular location is the cell membrane. In terms of biological role, potassium channel regulatory subunit that modulates the delayed rectifier potassium channel activity of KCNB1 by namely slowing down the deactivation and inactivation time constants. While it does not form functional channel on its own, it can form functional heterotetrameric channels with KCNB1. The polypeptide is Delayed-rectifier potassium channel regulatory subunit KCNS3 (Oryctolagus cuniculus (Rabbit)).